The sequence spans 196 residues: Probable thymidylate kinase (196 aa).

8–15 (GIDASGKT) provides a ligand contact to ATP.

It belongs to the thymidylate kinase family.

The catalysed reaction is dTMP + ATP = dTDP + ADP. The polypeptide is Probable thymidylate kinase (Metallosphaera sedula (strain ATCC 51363 / DSM 5348 / JCM 9185 / NBRC 15509 / TH2)).